Reading from the N-terminus, the 235-residue chain is Thiamine-phosphate synthase (235 aa).

4-amino-2-methyl-5-(diphosphooxymethyl)pyrimidine-binding positions include 50–54 and N91; that span reads QLRDK. Mg(2+)-binding residues include D92 and D111. S130 contributes to the 4-amino-2-methyl-5-(diphosphooxymethyl)pyrimidine binding site. 2-[(2R,5Z)-2-carboxy-4-methylthiazol-5(2H)-ylidene]ethyl phosphate is bound at residue 160-162; it reads TPT. Position 163 (K163) interacts with 4-amino-2-methyl-5-(diphosphooxymethyl)pyrimidine. G191 contributes to the 2-[(2R,5Z)-2-carboxy-4-methylthiazol-5(2H)-ylidene]ethyl phosphate binding site.

It belongs to the thiamine-phosphate synthase family. Mg(2+) serves as cofactor.

It carries out the reaction 2-[(2R,5Z)-2-carboxy-4-methylthiazol-5(2H)-ylidene]ethyl phosphate + 4-amino-2-methyl-5-(diphosphooxymethyl)pyrimidine + 2 H(+) = thiamine phosphate + CO2 + diphosphate. The enzyme catalyses 2-(2-carboxy-4-methylthiazol-5-yl)ethyl phosphate + 4-amino-2-methyl-5-(diphosphooxymethyl)pyrimidine + 2 H(+) = thiamine phosphate + CO2 + diphosphate. It catalyses the reaction 4-methyl-5-(2-phosphooxyethyl)-thiazole + 4-amino-2-methyl-5-(diphosphooxymethyl)pyrimidine + H(+) = thiamine phosphate + diphosphate. Its pathway is cofactor biosynthesis; thiamine diphosphate biosynthesis; thiamine phosphate from 4-amino-2-methyl-5-diphosphomethylpyrimidine and 4-methyl-5-(2-phosphoethyl)-thiazole: step 1/1. Functionally, condenses 4-methyl-5-(beta-hydroxyethyl)thiazole monophosphate (THZ-P) and 2-methyl-4-amino-5-hydroxymethyl pyrimidine pyrophosphate (HMP-PP) to form thiamine monophosphate (TMP). The chain is Thiamine-phosphate synthase from Mycobacterium leprae (strain TN).